A 329-amino-acid polypeptide reads, in one-letter code: 4-hydroxythreonine-4-phosphate dehydrogenase (329 aa).

Substrate contacts are provided by histidine 136 and threonine 137. 3 residues coordinate a divalent metal cation: histidine 166, histidine 211, and histidine 266. Residues lysine 274, asparagine 283, and arginine 292 each coordinate substrate.

Belongs to the PdxA family. Homodimer. The cofactor is Zn(2+). Requires Mg(2+) as cofactor. Co(2+) serves as cofactor.

The protein localises to the cytoplasm. The enzyme catalyses 4-(phosphooxy)-L-threonine + NAD(+) = 3-amino-2-oxopropyl phosphate + CO2 + NADH. It functions in the pathway cofactor biosynthesis; pyridoxine 5'-phosphate biosynthesis; pyridoxine 5'-phosphate from D-erythrose 4-phosphate: step 4/5. Functionally, catalyzes the NAD(P)-dependent oxidation of 4-(phosphooxy)-L-threonine (HTP) into 2-amino-3-oxo-4-(phosphooxy)butyric acid which spontaneously decarboxylates to form 3-amino-2-oxopropyl phosphate (AHAP). In Shigella boydii serotype 18 (strain CDC 3083-94 / BS512), this protein is 4-hydroxythreonine-4-phosphate dehydrogenase.